The sequence spans 406 residues: Linalool 8-monooxygenase (406 aa).

Cys-355 contacts heme.

The protein belongs to the cytochrome P450 family. The cofactor is heme.

It carries out the reaction linalool + 2 reduced [NADPH--hemoprotein reductase] + 2 O2 = (6E)-8-oxolinalool + 2 oxidized [NADPH--hemoprotein reductase] + 3 H2O + 2 H(+). It participates in terpene metabolism; linalool degradation. Functionally, catalyzes the 8-methyl hydroxylation of linalool. The chain is Linalool 8-monooxygenase (linC) from Pseudomonas putida (Arthrobacter siderocapsulatus).